A 315-amino-acid chain; its full sequence is MSESLRIIFAGTPDFAARHLDALLSSGHNIVGVFTQPDRPAGRGKKLMPSPVKVLAEDKGLPVFQPVSLRPQENQQLVADLQADVMVVVAYGLILPKAVLEMPRLGCINVHGSLLPRWRGAAPIQRSLWAGDAETGVTIMQMDVGLDTGDMLYKLSCPITAEDTSGTLYDKLAELGPQGLITTLKQLADGTAKPEVQDETLVTYAEKLSKEEARIDWSLSAAQLERCIRAFNPWPMSWLEIEGQPVKVWKASVIDTTTKAAPGTILEANKQGIQVATGDGILNLLSMQPAGKKAMSVQDLLNSRREWFVPGNRLA.

A (6S)-5,6,7,8-tetrahydrofolate-binding site is contributed by Ser-113–Pro-116.

The protein belongs to the Fmt family.

It catalyses the reaction L-methionyl-tRNA(fMet) + (6R)-10-formyltetrahydrofolate = N-formyl-L-methionyl-tRNA(fMet) + (6S)-5,6,7,8-tetrahydrofolate + H(+). Attaches a formyl group to the free amino group of methionyl-tRNA(fMet). The formyl group appears to play a dual role in the initiator identity of N-formylmethionyl-tRNA by promoting its recognition by IF2 and preventing the misappropriation of this tRNA by the elongation apparatus. This is Methionyl-tRNA formyltransferase from Escherichia coli O45:K1 (strain S88 / ExPEC).